The following is a 157-amino-acid chain: MRIGNGYDVHRLAPGQKLVLGGVEIPFECGLIGWSDADVLTHAIMDSLLGAAALGDIGLYFPPGDPKYKGISSLKLLEQVTDLLAKKGFGIINVDSVIVAEEPKLRGHIDTMRKHLAKAMGIDPGRVGIKASTSEQLGFVGRQEGMVAWAVALVDEK.

Asp8, His10, and His42 together coordinate a divalent metal cation. Position 8–10 (Asp8–His10) interacts with 4-CDP-2-C-methyl-D-erythritol 2-phosphate. 4-CDP-2-C-methyl-D-erythritol 2-phosphate-binding positions include Asp56 to Gly58, Ser132 to Glu135, Phe139, and Arg142.

This sequence belongs to the IspF family. In terms of assembly, homotrimer. A divalent metal cation serves as cofactor.

The catalysed reaction is 4-CDP-2-C-methyl-D-erythritol 2-phosphate = 2-C-methyl-D-erythritol 2,4-cyclic diphosphate + CMP. It functions in the pathway isoprenoid biosynthesis; isopentenyl diphosphate biosynthesis via DXP pathway; isopentenyl diphosphate from 1-deoxy-D-xylulose 5-phosphate: step 4/6. Involved in the biosynthesis of isopentenyl diphosphate (IPP) and dimethylallyl diphosphate (DMAPP), two major building blocks of isoprenoid compounds. Catalyzes the conversion of 4-diphosphocytidyl-2-C-methyl-D-erythritol 2-phosphate (CDP-ME2P) to 2-C-methyl-D-erythritol 2,4-cyclodiphosphate (ME-CPP) with a corresponding release of cytidine 5-monophosphate (CMP). This is 2-C-methyl-D-erythritol 2,4-cyclodiphosphate synthase from Dehalococcoides mccartyi (strain CBDB1).